The sequence spans 518 residues: Bifunctional purine biosynthesis protein PurH (518 aa).

One can recognise an MGS-like domain in the interval 1 to 146 (MSPIALLSVS…KNHQDVLVVT (146 aa)).

This sequence belongs to the PurH family.

It carries out the reaction (6R)-10-formyltetrahydrofolate + 5-amino-1-(5-phospho-beta-D-ribosyl)imidazole-4-carboxamide = 5-formamido-1-(5-phospho-D-ribosyl)imidazole-4-carboxamide + (6S)-5,6,7,8-tetrahydrofolate. The enzyme catalyses IMP + H2O = 5-formamido-1-(5-phospho-D-ribosyl)imidazole-4-carboxamide. It functions in the pathway purine metabolism; IMP biosynthesis via de novo pathway; 5-formamido-1-(5-phospho-D-ribosyl)imidazole-4-carboxamide from 5-amino-1-(5-phospho-D-ribosyl)imidazole-4-carboxamide (10-formyl THF route): step 1/1. Its pathway is purine metabolism; IMP biosynthesis via de novo pathway; IMP from 5-formamido-1-(5-phospho-D-ribosyl)imidazole-4-carboxamide: step 1/1. The polypeptide is Bifunctional purine biosynthesis protein PurH (Prochlorococcus marinus (strain NATL1A)).